A 274-amino-acid chain; its full sequence is 4-hydroxy-tetrahydrodipicolinate reductase (274 aa).

NAD(+) contacts are provided by residues 11–16 (GGSGRM) and Glu37. Arg38 lines the NADP(+) pocket. NAD(+)-binding positions include 101–103 (GTT) and 125–128 (APNM). His158 functions as the Proton donor/acceptor in the catalytic mechanism. His159 provides a ligand contact to (S)-2,3,4,5-tetrahydrodipicolinate. The active-site Proton donor is Lys162. 168-169 (GT) serves as a coordination point for (S)-2,3,4,5-tetrahydrodipicolinate.

It belongs to the DapB family.

Its subcellular location is the cytoplasm. The enzyme catalyses (S)-2,3,4,5-tetrahydrodipicolinate + NAD(+) + H2O = (2S,4S)-4-hydroxy-2,3,4,5-tetrahydrodipicolinate + NADH + H(+). The catalysed reaction is (S)-2,3,4,5-tetrahydrodipicolinate + NADP(+) + H2O = (2S,4S)-4-hydroxy-2,3,4,5-tetrahydrodipicolinate + NADPH + H(+). It participates in amino-acid biosynthesis; L-lysine biosynthesis via DAP pathway; (S)-tetrahydrodipicolinate from L-aspartate: step 4/4. Functionally, catalyzes the conversion of 4-hydroxy-tetrahydrodipicolinate (HTPA) to tetrahydrodipicolinate. The sequence is that of 4-hydroxy-tetrahydrodipicolinate reductase from Shewanella pealeana (strain ATCC 700345 / ANG-SQ1).